Consider the following 78-residue polypeptide: Gas vesicle protein A (78 aa).

Belongs to the gas vesicle GvpA family. The gas vesicle shell is 2 nm thick and consists of a single layer of this protein. It forms helical ribs nearly perpendicular to the long axis of the vesicle.

It is found in the gas vesicle shell. Functionally, gas vesicles are hollow, gas filled proteinaceous nanostructures found in some microorganisms. During planktonic growth they allow positioning of the organism at a favorable depth for light or nutrient acquisition. GvpA forms the protein shell. This chain is Gas vesicle protein A, found in Halorubrum vacuolatum (Natronobacterium vacuolatum).